The following is a 256-amino-acid chain: Small ribosomal subunit protein eS1A (256 aa).

N-acetylalanine; partial is present on A2.

It belongs to the eukaryotic ribosomal protein eS1 family. As to quaternary structure, component of the small ribosomal subunit. Mature ribosomes consist of a small (40S) and a large (60S) subunit. The 40S subunit contains about 33 different proteins and 1 molecule of RNA (18S). The 60S subunit contains about 49 different proteins and 3 molecules of RNA (25S, 5.8S and 5S).

It is found in the cytoplasm. This is Small ribosomal subunit protein eS1A from Clavispora lusitaniae (strain ATCC 42720) (Yeast).